The sequence spans 132 residues: Translation initiation factor 5A (132 aa).

A Hypusine modification is found at Lys36.

The protein belongs to the eIF-5A family.

Its subcellular location is the cytoplasm. Its function is as follows. Functions by promoting the formation of the first peptide bond. The chain is Translation initiation factor 5A (eIF5A) from Pyrobaculum arsenaticum (strain DSM 13514 / JCM 11321 / PZ6).